The sequence spans 313 residues: PGR5-like protein 1B, chloroplastic (313 aa).

The N-terminal 49 residues, 1 to 49, are a transit peptide targeting the chloroplast; the sequence is MAFTLTIPRFSAISRKPITCSSSRTQCPAPFTHGRSISLRRRLTLLPLK. Ala-50 carries the post-translational modification N-acetylalanine. Over 50–187 the chain is Stromal; the sequence is ASTDQSGQVG…KVYSDLAIDY (138 aa). A disulfide bridge links Cys-71 with Cys-172. The chain crosses the membrane as a helical span at residues 188 to 208; sequence FKMFLLNVPATVVALGLFFFL. The Lumenal, thylakoid portion of the chain corresponds to 209–225; that stretch reads DDITGFEITYLLELPEP. A helical membrane pass occupies residues 226–246; that stretch reads FSFIFTWFAAVPAIVYLALSL. The Stromal portion of the chain corresponds to 247–313; the sequence is TKLILKDFLI…LITLPEGGKA (67 aa).

This sequence belongs to the PGR5 family. In terms of assembly, homodimer and heterodimer with PGR5. Interacts with PGR5, FD2, psaD1, LFNR1 and LFNR2. Also interacts with petC and a Fe-containing cofactor (FCC). Post-translationally, disulfide bonds; Cys-289 and Cys-292 are probably involved in the formation of disulfide bridges with 'Cys-11' and 'Cys-105' of PGR5 while Cys-261 and Cys-264 are probably involved in the binding of a Fe-containing cofactor (FCC).

The protein localises to the plastid. It localises to the chloroplast thylakoid membrane. With respect to regulation, inhibited by antimycin A. Its function is as follows. Ferredoxin-plastoquinone reductase involved in cyclic electron flow (CEF) around photosystem I. The homodimer is probably not involved in CEF. This is PGR5-like protein 1B, chloroplastic (PGRL1B) from Arabidopsis thaliana (Mouse-ear cress).